The following is a 462-amino-acid chain: 2-amino-5-chloromuconic acid deaminase (462 aa).

Residues Lys-79 and Ser-156 each act as charge relay system in the active site. The Acyl-ester intermediate role is filled by Ser-180.

This sequence belongs to the amidase family.

The enzyme catalyses (2Z,4E)-2-aminomuconate + H2O = (3E)-2-oxohex-3-enedioate + NH4(+). It participates in xenobiotic degradation; nitrobenzene degradation. Its pathway is xenobiotic degradation; 4-chloronitrobenzene degradation. Its function is as follows. Involved in the biodegradation of nitroaromatic and chlorinated nitroaromatic compounds. Catalyzes the conversion of 2-amino-5-chloromuconic acid into 2-hydroxy-5-chloromuconic acid and ammonia. Also able to catalyze the transformation of 2-aminomuconic acid into 2-hydroxymuconic acid. The protein is 2-amino-5-chloromuconic acid deaminase of Comamonas testosteroni (Pseudomonas testosteroni).